Here is a 559-residue protein sequence, read N- to C-terminus: Small ribosomal subunit protein uS3m (559 aa).

Residues 113–134 (EGTEEERNEVRGRGAGKRVESI) form a disordered region. Residues 120-134 (NEVRGRGAGKRVESI) show a composition bias toward basic and acidic residues.

The protein belongs to the universal ribosomal protein uS3 family.

The protein resides in the mitochondrion. The chain is Small ribosomal subunit protein uS3m (RPS3) from Zea mays (Maize).